The primary structure comprises 361 residues: Phospho-N-acetylmuramoyl-pentapeptide-transferase (361 aa).

Helical transmembrane passes span 25–45 (RGIL…PAVI), 73–93 (TMGG…WGDL), 98–118 (VWLV…DDWI), 139–159 (IFGL…AAIT), 168–188 (IALP…IVGF), 200–220 (GLAI…AYAS), 237–257 (AGEL…FLWF), 264–284 (VFMG…IAVI), 290–310 (VLVI…IQVV), and 339–359 (VIVR…ATLK).

Belongs to the glycosyltransferase 4 family. MraY subfamily. It depends on Mg(2+) as a cofactor.

The protein resides in the cell inner membrane. The enzyme catalyses UDP-N-acetyl-alpha-D-muramoyl-L-alanyl-gamma-D-glutamyl-meso-2,6-diaminopimeloyl-D-alanyl-D-alanine + di-trans,octa-cis-undecaprenyl phosphate = di-trans,octa-cis-undecaprenyl diphospho-N-acetyl-alpha-D-muramoyl-L-alanyl-D-glutamyl-meso-2,6-diaminopimeloyl-D-alanyl-D-alanine + UMP. It participates in cell wall biogenesis; peptidoglycan biosynthesis. Its function is as follows. Catalyzes the initial step of the lipid cycle reactions in the biosynthesis of the cell wall peptidoglycan: transfers peptidoglycan precursor phospho-MurNAc-pentapeptide from UDP-MurNAc-pentapeptide onto the lipid carrier undecaprenyl phosphate, yielding undecaprenyl-pyrophosphoryl-MurNAc-pentapeptide, known as lipid I. The sequence is that of Phospho-N-acetylmuramoyl-pentapeptide-transferase from Xanthomonas euvesicatoria pv. vesicatoria (strain 85-10) (Xanthomonas campestris pv. vesicatoria).